The chain runs to 115 residues: Large ribosomal subunit protein bL19 (115 aa).

Belongs to the bacterial ribosomal protein bL19 family.

In terms of biological role, this protein is located at the 30S-50S ribosomal subunit interface and may play a role in the structure and function of the aminoacyl-tRNA binding site. This is Large ribosomal subunit protein bL19 from Desulfovibrio desulfuricans (strain ATCC 27774 / DSM 6949 / MB).